The sequence spans 143 residues: Transcriptional regulator MraZ (143 aa).

2 consecutive SpoVT-AbrB domains span residues 5 to 47 (EFEH…PMTE) and 76 to 119 (ATEC…SAER).

Belongs to the MraZ family. As to quaternary structure, forms oligomers.

The protein localises to the cytoplasm. It localises to the nucleoid. The polypeptide is Transcriptional regulator MraZ (Levilactobacillus brevis (strain ATCC 367 / BCRC 12310 / CIP 105137 / JCM 1170 / LMG 11437 / NCIMB 947 / NCTC 947) (Lactobacillus brevis)).